The primary structure comprises 460 residues: Bifunctional protein GlmU (460 aa).

Residues 1–230 (MSNNYAIILA…FDESLGVNDR (230 aa)) form a pyrophosphorylase region. UDP-N-acetyl-alpha-D-glucosamine is bound by residues 9 to 12 (LAAG), K23, Q73, and 78 to 79 (GT). D103 is a Mg(2+) binding site. The UDP-N-acetyl-alpha-D-glucosamine site is built by G140, E155, N170, and N228. N228 contacts Mg(2+). The segment at 231–251 (VALATAEAVMRKRINEKHMVN) is linker. Positions 252 to 460 (GVTFINPDAT…TRFPFHPSQK (209 aa)) are N-acetyltransferase. Residues R333 and K351 each contribute to the UDP-N-acetyl-alpha-D-glucosamine site. The active-site Proton acceptor is H363. UDP-N-acetyl-alpha-D-glucosamine-binding residues include Y366 and N377. Residues A380, 386 to 387 (NY), S405, A423, and R440 contribute to the acetyl-CoA site.

It in the N-terminal section; belongs to the N-acetylglucosamine-1-phosphate uridyltransferase family. This sequence in the C-terminal section; belongs to the transferase hexapeptide repeat family. Homotrimer. Requires Mg(2+) as cofactor.

It localises to the cytoplasm. It catalyses the reaction alpha-D-glucosamine 1-phosphate + acetyl-CoA = N-acetyl-alpha-D-glucosamine 1-phosphate + CoA + H(+). It carries out the reaction N-acetyl-alpha-D-glucosamine 1-phosphate + UTP + H(+) = UDP-N-acetyl-alpha-D-glucosamine + diphosphate. The protein operates within nucleotide-sugar biosynthesis; UDP-N-acetyl-alpha-D-glucosamine biosynthesis; N-acetyl-alpha-D-glucosamine 1-phosphate from alpha-D-glucosamine 6-phosphate (route II): step 2/2. Its pathway is nucleotide-sugar biosynthesis; UDP-N-acetyl-alpha-D-glucosamine biosynthesis; UDP-N-acetyl-alpha-D-glucosamine from N-acetyl-alpha-D-glucosamine 1-phosphate: step 1/1. It functions in the pathway bacterial outer membrane biogenesis; LPS lipid A biosynthesis. Its function is as follows. Catalyzes the last two sequential reactions in the de novo biosynthetic pathway for UDP-N-acetylglucosamine (UDP-GlcNAc). The C-terminal domain catalyzes the transfer of acetyl group from acetyl coenzyme A to glucosamine-1-phosphate (GlcN-1-P) to produce N-acetylglucosamine-1-phosphate (GlcNAc-1-P), which is converted into UDP-GlcNAc by the transfer of uridine 5-monophosphate (from uridine 5-triphosphate), a reaction catalyzed by the N-terminal domain. The chain is Bifunctional protein GlmU from Streptococcus suis (strain 98HAH33).